Consider the following 198-residue polypeptide: MEHYISLFVRAVFVENMALAFFLGMCTFLAVSKKVSTAFGLGIAVTLVLGISVPVNNLVYNLILRDGALVEGVDLSFLNFITFIGVIAALVQILEMILDRFFPSLYNALGIFLPLITVNCAIFGGVSFMVQRDYNFAESVVYGFGSGTGWMLAIVAMAGIREKLKYANVPAGLRGLGITFITTGLMALGFMSFSGVQL.

A run of 6 helical transmembrane segments spans residues 11 to 31 (AVFV…FLAV), 35 to 55 (VSTA…SVPV), 77 to 97 (FLNF…LEMI), 110 to 130 (GIFL…SFMV), 140 to 160 (VVYG…MAGI), and 176 to 196 (LGIT…FSGV).

Belongs to the NqrDE/RnfAE family. Composed of six subunits; NqrA, NqrB, NqrC, NqrD, NqrE and NqrF.

It is found in the cell inner membrane. It carries out the reaction a ubiquinone + n Na(+)(in) + NADH + H(+) = a ubiquinol + n Na(+)(out) + NAD(+). NQR complex catalyzes the reduction of ubiquinone-1 to ubiquinol by two successive reactions, coupled with the transport of Na(+) ions from the cytoplasm to the periplasm. NqrA to NqrE are probably involved in the second step, the conversion of ubisemiquinone to ubiquinol. This chain is Na(+)-translocating NADH-quinone reductase subunit E, found in Serratia proteamaculans (strain 568).